The sequence spans 87 residues: MAKEELLELDGIVDEVLPDSKYRVTLENGVVVGAYASGRMRKNHIRILAGDRVTLELSVYDLTKGRINFRHKDANSPRPPRSGQPRR.

The 72-residue stretch at 1–72 (MAKEELLELD…TKGRINFRHK (72 aa)) folds into the S1-like domain. The segment at 68–87 (NFRHKDANSPRPPRSGQPRR) is disordered. The span at 77–87 (PRPPRSGQPRR) shows a compositional bias: pro residues.

The protein belongs to the IF-1 family. In terms of assembly, component of the 30S ribosomal translation pre-initiation complex which assembles on the 30S ribosome in the order IF-2 and IF-3, IF-1 and N-formylmethionyl-tRNA(fMet); mRNA recruitment can occur at any time during PIC assembly.

Its subcellular location is the cytoplasm. In terms of biological role, one of the essential components for the initiation of protein synthesis. Stabilizes the binding of IF-2 and IF-3 on the 30S subunit to which N-formylmethionyl-tRNA(fMet) subsequently binds. Helps modulate mRNA selection, yielding the 30S pre-initiation complex (PIC). Upon addition of the 50S ribosomal subunit IF-1, IF-2 and IF-3 are released leaving the mature 70S translation initiation complex. In Burkholderia cenocepacia (strain HI2424), this protein is Translation initiation factor IF-1 2.